The following is a 257-amino-acid chain: 5-keto-4-deoxy-D-glucarate aldolase (257 aa).

His51 functions as the Proton acceptor in the catalytic mechanism. Substrate is bound at residue Gln152. A Mg(2+)-binding site is contributed by Glu154. Residues Ser179 and Asp180 each contribute to the substrate site. Asp180 contributes to the Mg(2+) binding site.

Belongs to the HpcH/HpaI aldolase family. KDGluc aldolase subfamily. As to quaternary structure, homohexamer; trimer of dimers. It depends on Mg(2+) as a cofactor.

The catalysed reaction is 5-dehydro-4-deoxy-D-glucarate = 2-hydroxy-3-oxopropanoate + pyruvate. The enzyme catalyses 2-dehydro-3-deoxy-D-glucarate = 2-hydroxy-3-oxopropanoate + pyruvate. It functions in the pathway carbohydrate acid metabolism; galactarate degradation; D-glycerate from galactarate: step 2/3. Functionally, catalyzes the reversible retro-aldol cleavage of both 5-keto-4-deoxy-D-glucarate and 2-keto-3-deoxy-D-glucarate to pyruvate and tartronic semialdehyde. This chain is 5-keto-4-deoxy-D-glucarate aldolase, found in Citrobacter koseri (strain ATCC BAA-895 / CDC 4225-83 / SGSC4696).